Consider the following 73-residue polypeptide: Disintegrin cerastin (73 aa).

Positions 1-73 constitute a Disintegrin domain; the sequence is EAGEECDCGT…ADCPRNGLYG (73 aa). 6 cysteine pairs are disulfide-bonded: Cys6–Cys21, Cys8–Cys16, Cys15–Cys38, Cys29–Cys35, Cys34–Cys59, and Cys47–Cys66. Residues 51 to 53 carry the Cell attachment site motif; sequence RGD.

Belongs to the venom metalloproteinase (M12B) family. P-II subfamily. P-IIa sub-subfamily. As to quaternary structure, monomer (disintegrin). Expressed by the venom gland.

The protein resides in the secreted. Functionally, inhibits fibrinogen interaction with platelets. Acts by binding to alpha-IIb/beta-3 (ITGA2B/ITGB3) on the platelet surface and inhibits aggregation induced by ADP, thrombin, platelet-activating factor and collagen. The protein is Disintegrin cerastin of Crotalus cerastes cerastes (Mojave desert sidewinder).